A 77-amino-acid polypeptide reads, in one-letter code: Small ribosomal subunit protein bS21 (77 aa).

The disordered stretch occupies residues 55-77 (RKLARKRAQREGLMSNGRISALR).

This sequence belongs to the bacterial ribosomal protein bS21 family.

This Bartonella quintana (strain Toulouse) (Rochalimaea quintana) protein is Small ribosomal subunit protein bS21.